A 287-amino-acid polypeptide reads, in one-letter code: Ribosomal RNA small subunit methyltransferase I (287 aa).

Belongs to the methyltransferase superfamily. RsmI family.

Its subcellular location is the cytoplasm. The enzyme catalyses cytidine(1402) in 16S rRNA + S-adenosyl-L-methionine = 2'-O-methylcytidine(1402) in 16S rRNA + S-adenosyl-L-homocysteine + H(+). Its function is as follows. Catalyzes the 2'-O-methylation of the ribose of cytidine 1402 (C1402) in 16S rRNA. The chain is Ribosomal RNA small subunit methyltransferase I from Streptococcus pyogenes serotype M18 (strain MGAS8232).